The chain runs to 125 residues: C-X-C motif chemokine 9 (125 aa).

Residues Met1 to Gly22 form the signal peptide. 2 disulfides stabilise this stretch: Cys31–Cys58 and Cys33–Cys74. The interval Val93 to Thr125 is disordered. Residues Ser94–Thr125 show a composition bias toward basic residues.

This sequence belongs to the intercrine alpha (chemokine CxC) family.

It is found in the secreted. In terms of biological role, cytokine that affects the growth, movement, or activation state of cells that participate in immune and inflammatory response. Chemotactic for activated T-cells. Binds to CXCR3. This Homo sapiens (Human) protein is C-X-C motif chemokine 9 (CXCL9).